Consider the following 207-residue polypeptide: Cytochrome c biogenesis ATP-binding export protein CcmA (207 aa).

The ABC transporter domain maps to 4–207 (LEVRELLCER…RISLTQTRAV (204 aa)). Residue 36 to 43 (GSNGAGKT) participates in ATP binding.

This sequence belongs to the ABC transporter superfamily. CcmA exporter (TC 3.A.1.107) family. The complex is composed of two ATP-binding proteins (CcmA) and two transmembrane proteins (CcmB).

It is found in the cell inner membrane. It catalyses the reaction heme b(in) + ATP + H2O = heme b(out) + ADP + phosphate + H(+). Its function is as follows. Part of the ABC transporter complex CcmAB involved in the biogenesis of c-type cytochromes; once thought to export heme, this seems not to be the case, but its exact role is uncertain. Responsible for energy coupling to the transport system. The sequence is that of Cytochrome c biogenesis ATP-binding export protein CcmA from Escherichia coli O157:H7.